A 154-amino-acid chain; its full sequence is Ribosome maturation factor RimP (154 aa).

It belongs to the RimP family.

Its subcellular location is the cytoplasm. In terms of biological role, required for maturation of 30S ribosomal subunits. This Clostridium perfringens (strain ATCC 13124 / DSM 756 / JCM 1290 / NCIMB 6125 / NCTC 8237 / Type A) protein is Ribosome maturation factor RimP.